A 540-amino-acid polypeptide reads, in one-letter code: Chaperonin GroEL 3 (540 aa).

ATP is bound by residues 30–33 (TLGP), K51, 87–91 (DGTTT), G415, 479–481 (NAA), and D495.

It belongs to the chaperonin (HSP60) family. As to quaternary structure, forms a cylinder of 14 subunits composed of two heptameric rings stacked back-to-back. Interacts with the co-chaperonin GroES.

The protein localises to the cytoplasm. It carries out the reaction ATP + H2O + a folded polypeptide = ADP + phosphate + an unfolded polypeptide.. Its function is as follows. Together with its co-chaperonin GroES, plays an essential role in assisting protein folding. The GroEL-GroES system forms a nano-cage that allows encapsulation of the non-native substrate proteins and provides a physical environment optimized to promote and accelerate protein folding. The chain is Chaperonin GroEL 3 from Burkholderia ambifaria (strain ATCC BAA-244 / DSM 16087 / CCUG 44356 / LMG 19182 / AMMD) (Burkholderia cepacia (strain AMMD)).